A 324-amino-acid chain; its full sequence is Glycerol-3-phosphate dehydrogenase [NAD(P)+] (324 aa).

NADPH contacts are provided by tryptophan 15, arginine 35, and lysine 101. Residues lysine 101 and glycine 129 each coordinate sn-glycerol 3-phosphate. NADPH is bound at residue alanine 133. Residues lysine 184, aspartate 237, serine 247, arginine 248, and asparagine 249 each coordinate sn-glycerol 3-phosphate. Lysine 184 acts as the Proton acceptor in catalysis. Arginine 248 serves as a coordination point for NADPH. NADPH is bound by residues valine 272 and glutamate 274.

The protein belongs to the NAD-dependent glycerol-3-phosphate dehydrogenase family.

The protein resides in the cytoplasm. The enzyme catalyses sn-glycerol 3-phosphate + NAD(+) = dihydroxyacetone phosphate + NADH + H(+). The catalysed reaction is sn-glycerol 3-phosphate + NADP(+) = dihydroxyacetone phosphate + NADPH + H(+). It participates in membrane lipid metabolism; glycerophospholipid metabolism. Its function is as follows. Catalyzes the reduction of the glycolytic intermediate dihydroxyacetone phosphate (DHAP) to sn-glycerol 3-phosphate (G3P), the key precursor for phospholipid synthesis. The polypeptide is Glycerol-3-phosphate dehydrogenase [NAD(P)+] (Gluconobacter oxydans (strain 621H) (Gluconobacter suboxydans)).